We begin with the raw amino-acid sequence, 408 residues long: Phosphoglycerate kinase (408 aa).

Substrate is bound by residues 28–30 (DIN), R43, 66–69 (HQGR), R123, and R163. ATP-binding positions include E334 and 358-361 (GGHT).

It belongs to the phosphoglycerate kinase family. As to quaternary structure, monomer.

The protein localises to the cytoplasm. The enzyme catalyses (2R)-3-phosphoglycerate + ATP = (2R)-3-phospho-glyceroyl phosphate + ADP. It participates in carbohydrate degradation; glycolysis; pyruvate from D-glyceraldehyde 3-phosphate: step 2/5. This is Phosphoglycerate kinase from Pyrobaculum aerophilum (strain ATCC 51768 / DSM 7523 / JCM 9630 / CIP 104966 / NBRC 100827 / IM2).